Consider the following 80-residue polypeptide: ATP synthase subunit c (80 aa).

The next 2 membrane-spanning stretches (helical) occupy residues Met-8–Ile-28 and Ile-55–Ile-75.

Belongs to the ATPase C chain family. As to quaternary structure, F-type ATPases have 2 components, F(1) - the catalytic core - and F(0) - the membrane proton channel. F(1) has five subunits: alpha(3), beta(3), gamma(1), delta(1), epsilon(1). F(0) has three main subunits: a(1), b(2) and c(10-14). The alpha and beta chains form an alternating ring which encloses part of the gamma chain. F(1) is attached to F(0) by a central stalk formed by the gamma and epsilon chains, while a peripheral stalk is formed by the delta and b chains.

The protein localises to the cell inner membrane. Its function is as follows. F(1)F(0) ATP synthase produces ATP from ADP in the presence of a proton or sodium gradient. F-type ATPases consist of two structural domains, F(1) containing the extramembraneous catalytic core and F(0) containing the membrane proton channel, linked together by a central stalk and a peripheral stalk. During catalysis, ATP synthesis in the catalytic domain of F(1) is coupled via a rotary mechanism of the central stalk subunits to proton translocation. Functionally, key component of the F(0) channel; it plays a direct role in translocation across the membrane. A homomeric c-ring of between 10-14 subunits forms the central stalk rotor element with the F(1) delta and epsilon subunits. The protein is ATP synthase subunit c of Aeromonas salmonicida (strain A449).